The chain runs to 270 residues: Phosphatidylglycerol--prolipoprotein diacylglyceryl transferase (270 aa).

Helical transmembrane passes span 19–39, 56–76, 92–112, and 116–136; these read FPVY…LWLA, LVLI…VIFE, QGGL…ILFA, and GVSF…GQAI. Arg138 contributes to the a 1,2-diacyl-sn-glycero-3-phospho-(1'-sn-glycerol) binding site. 3 helical membrane passes run 178–198, 206–226, and 236–256; these read HPTF…LLAL, GELF…VEGL, and LRIA…FIIV.

It belongs to the Lgt family.

The protein resides in the cell membrane. The catalysed reaction is L-cysteinyl-[prolipoprotein] + a 1,2-diacyl-sn-glycero-3-phospho-(1'-sn-glycerol) = an S-1,2-diacyl-sn-glyceryl-L-cysteinyl-[prolipoprotein] + sn-glycerol 1-phosphate + H(+). The protein operates within protein modification; lipoprotein biosynthesis (diacylglyceryl transfer). Its function is as follows. Catalyzes the transfer of the diacylglyceryl group from phosphatidylglycerol to the sulfhydryl group of the N-terminal cysteine of a prolipoprotein, the first step in the formation of mature lipoproteins. The sequence is that of Phosphatidylglycerol--prolipoprotein diacylglyceryl transferase from Bacillus cereus (strain ZK / E33L).